The chain runs to 947 residues: Leucine-rich repeat-containing protein 37B (947 aa).

An N-terminal signal peptide occupies residues 1–27 (MSWLRFWGPWPLLTWQLLSLLVKEAQP). The Extracellular segment spans residues 28–905 (LVWVKDPLQL…EVPGDDYKNK (878 aa)). Disordered regions lie at residues 42–88 (LGPP…ALPQ), 226–257 (YLSM…QVGL), 294–458 (EVEP…PEPT), and 484–514 (SLTE…EQKA). The segment covering 311–320 (SMESLAQTPL) has biased composition (polar residues). N-linked (GlcNAc...) asparagine glycosylation occurs at asparagine 358. Composition is skewed to polar residues over residues 404–415 (GQAQHSHLTEAT), 436–445 (SPTTEETSAQ), and 495–507 (LESS…QSET). LRR repeat units follow at residues 556 to 577 (IFTT…VWKA), 580 to 601 (WTEK…SFEG), 604 to 625 (YLQY…TFES), 628 to 649 (FLQY…TFQA), 655 to 676 (FLHN…YLFE), and 679 to 699 (ALKY…KNIL). The N-linked (GlcNAc...) asparagine glycan is linked to asparagine 789. Positions 867–897 (DTDQQKTNYINENMEQNEQKEQKSSELMKEV) form a coiled coil. Residues 906–926 (LIFAISVTVILIILIIIFCLI) form a helical membrane-spanning segment. Over 927-947 (EVNSHKRASEKYKDNPSISGA) the chain is Cytoplasmic.

It localises to the membrane. The protein is Leucine-rich repeat-containing protein 37B (LRRC37B) of Homo sapiens (Human).